The primary structure comprises 108 residues: uncharacterized protein (108 aa).

2 stretches are compositionally biased toward basic and acidic residues: residues Met1 to Val15 and Lys53 to Glu69. Residues Met1–Lys77 form a disordered region.

This is an uncharacterized protein from Homo sapiens (Human).